The chain runs to 188 residues: Elongation factor P (188 aa).

Belongs to the elongation factor P family.

It localises to the cytoplasm. It functions in the pathway protein biosynthesis; polypeptide chain elongation. Its function is as follows. Involved in peptide bond synthesis. Stimulates efficient translation and peptide-bond synthesis on native or reconstituted 70S ribosomes in vitro. Probably functions indirectly by altering the affinity of the ribosome for aminoacyl-tRNA, thus increasing their reactivity as acceptors for peptidyl transferase. The protein is Elongation factor P of Wolbachia pipientis subsp. Culex pipiens (strain wPip).